The sequence spans 583 residues: Sensor protein SrrB (583 aa).

The Cytoplasmic portion of the chain corresponds to 1-11; it reads MMSRLNSVVIK. A helical membrane pass occupies residues 12 to 32; the sequence is LWLTIILIVTTVLILLSIALI. Topologically, residues 33–174 are extracellular; that stretch reads TFMQYYFTQE…SIEDTNNAIT (142 aa). The chain crosses the membrane as a helical span at residues 175 to 195; that stretch reads IITIITAVIFLTITTVFAFFL. The Cytoplasmic segment spans residues 196 to 583; the sequence is SSRITKPLRR…TFIIKLPKPE (388 aa). The 53-residue stretch at 197–249 folds into the HAMP domain; sequence SRITKPLRRLRDQATRVSEGDYSYKPSVTTKDEIGQLSQAFNQMSTEIEEHVD. One can recognise a Histidine kinase domain in the interval 366–583; that stretch reads NVSHELRTPI…TFIIKLPKPE (218 aa). Residue His-369 is modified to Phosphohistidine; by autocatalysis.

It localises to the cell membrane. It carries out the reaction ATP + protein L-histidine = ADP + protein N-phospho-L-histidine.. Functionally, member of the two-component regulatory system SrrA/SrrB, which is involved in the global regulation of staphylococcal virulence factors in response to environmental oxygen levels as well as biofilm formation. Also plays an essential role in host-derived nitric oxide resistance by regulating hmp/flavohemoglobin, an enzyme that detoxifies nitric oxide by converting it to nitrate. Functions as a sensor protein kinase which is autophosphorylated at a histidine residue and transfers its phosphate group to SrrA. In turn, SrrA binds to the upstream promoter regions of the target genes to positively and negatively regulate their expression. This is Sensor protein SrrB (srrB) from Staphylococcus aureus (strain MRSA252).